We begin with the raw amino-acid sequence, 418 residues long: Probable carboxypeptidase AFLA_000940 (418 aa).

An N-terminal signal peptide occupies residues 1-18 (MKATDLFHVTVLVAGALA). Asn74 carries an N-linked (GlcNAc...) asparagine glycan. Position 147 (Asp147) interacts with Zn(2+). N-linked (GlcNAc...) asparagine glycosylation is present at Asn168. Residue Glu179 is the Proton acceptor of the active site. Zn(2+) is bound at residue Glu180.

This sequence belongs to the peptidase M20A family. The cofactor is Zn(2+).

The protein resides in the secreted. The sequence is that of Probable carboxypeptidase AFLA_000940 from Aspergillus flavus (strain ATCC 200026 / FGSC A1120 / IAM 13836 / NRRL 3357 / JCM 12722 / SRRC 167).